The following is a 289-amino-acid chain: 4-hydroxy-3-methylbut-2-enyl diphosphate reductase (289 aa).

Position 12 (C12) interacts with [4Fe-4S] cluster. Residues H44 and H81 each contribute to the (2E)-4-hydroxy-3-methylbut-2-enyl diphosphate site. Dimethylallyl diphosphate is bound by residues H44 and H81. Isopentenyl diphosphate is bound by residues H44 and H81. A [4Fe-4S] cluster-binding site is contributed by C103. A (2E)-4-hydroxy-3-methylbut-2-enyl diphosphate-binding site is contributed by H130. H130 is a dimethylallyl diphosphate binding site. H130 serves as a coordination point for isopentenyl diphosphate. The Proton donor role is filled by E132. Residue T174 coordinates (2E)-4-hydroxy-3-methylbut-2-enyl diphosphate. C202 is a [4Fe-4S] cluster binding site. Residues S230, N232, and S273 each coordinate (2E)-4-hydroxy-3-methylbut-2-enyl diphosphate. Dimethylallyl diphosphate-binding residues include S230, N232, and S273. Isopentenyl diphosphate contacts are provided by S230, N232, and S273.

The protein belongs to the IspH family. Requires [4Fe-4S] cluster as cofactor.

It carries out the reaction isopentenyl diphosphate + 2 oxidized [2Fe-2S]-[ferredoxin] + H2O = (2E)-4-hydroxy-3-methylbut-2-enyl diphosphate + 2 reduced [2Fe-2S]-[ferredoxin] + 2 H(+). The enzyme catalyses dimethylallyl diphosphate + 2 oxidized [2Fe-2S]-[ferredoxin] + H2O = (2E)-4-hydroxy-3-methylbut-2-enyl diphosphate + 2 reduced [2Fe-2S]-[ferredoxin] + 2 H(+). It functions in the pathway isoprenoid biosynthesis; dimethylallyl diphosphate biosynthesis; dimethylallyl diphosphate from (2E)-4-hydroxy-3-methylbutenyl diphosphate: step 1/1. The protein operates within isoprenoid biosynthesis; isopentenyl diphosphate biosynthesis via DXP pathway; isopentenyl diphosphate from 1-deoxy-D-xylulose 5-phosphate: step 6/6. In terms of biological role, catalyzes the conversion of 1-hydroxy-2-methyl-2-(E)-butenyl 4-diphosphate (HMBPP) into a mixture of isopentenyl diphosphate (IPP) and dimethylallyl diphosphate (DMAPP). Acts in the terminal step of the DOXP/MEP pathway for isoprenoid precursor biosynthesis. This chain is 4-hydroxy-3-methylbut-2-enyl diphosphate reductase, found in Treponema denticola (strain ATCC 35405 / DSM 14222 / CIP 103919 / JCM 8153 / KCTC 15104).